A 251-amino-acid chain; its full sequence is 14-3-3-like protein (251 aa).

It belongs to the 14-3-3 family. In terms of tissue distribution, most abundant in roots and flowers.

This Nicotiana tabacum (Common tobacco) protein is 14-3-3-like protein.